The following is a 635-amino-acid chain: Early transcription factor 70 kDa subunit (635 aa).

The Helicase ATP-binding domain occupies 32 to 185; the sequence is RSILDENNSV…SNIISIMSDE (154 aa). Residue 45–52 participates in ATP binding; sequence HIMGSGKT. The DEXH box motif lies at 135 to 138; that stretch reads DEAH.

Belongs to the helicase family. VETF subfamily. Heterodimer of a 70 kDa and a 82 kDa subunit. Part of the early transcription complex composed of ETF, RAP94, and the DNA-directed RNA polymerase.

Its subcellular location is the virion. Its function is as follows. Acts with RNA polymerase to initiate transcription from early gene promoters. Is recruited by the RPO-associated protein of 94 kDa (RAP94) to form the early transcription complex, which also contains the core RNA polymerase. ETF heterodimer binds to early gene promoters. The chain is Early transcription factor 70 kDa subunit (VETFS) from Homo sapiens (Human).